A 287-amino-acid polypeptide reads, in one-letter code: Protein UL24 homolog (287 aa).

2 disordered regions span residues Met1–Arg33 and Arg254–Leu287. Positions His16–Arg33 are enriched in basic residues.

It belongs to the herpesviridae UL24 family.

It is found in the virion. The protein resides in the host cytoplasm. Its subcellular location is the host nucleus. The protein localises to the host nucleolus. It localises to the host Golgi apparatus. May participate in nuclear egress of viral particles. Plays a role in the dispersal of several host nucleolar proteins including NCL/nucleolin and NPM1. Since deletion of host NCL/nucleolin negatively impact on nuclear egress, UL24 supposedly acts on this process through its effect on host nucleoli. The chain is Protein UL24 homolog from Infectious laryngotracheitis virus (strain Thorne V882) (ILTV).